The primary structure comprises 169 residues: CKLF-like MARVEL transmembrane domain-containing protein 2A (169 aa).

Helical transmembrane passes span 40-60, 69-89, 98-118, and 136-156; these read FWLS…ISAL, HPVL…FIFL, IPFV…CVFL, and YLTA…DMLL. In terms of domain architecture, MARVEL spans 40–162; the sequence is FWLSGHAVFK…DMLLQFQHFR (123 aa).

The protein belongs to the chemokine-like factor family.

Its subcellular location is the membrane. In Mus musculus (Mouse), this protein is CKLF-like MARVEL transmembrane domain-containing protein 2A (Cmtm2a).